A 198-amino-acid polypeptide reads, in one-letter code: Pyridoxal 5'-phosphate synthase subunit PdxT (198 aa).

Position 50–52 (50–52) interacts with L-glutamine; that stretch reads GES. Residue C82 is the Nucleophile of the active site. L-glutamine-binding positions include R114 and 143–144; that span reads IR. Residues H179 and E181 each act as charge relay system in the active site.

This sequence belongs to the glutaminase PdxT/SNO family. In terms of assembly, in the presence of PdxS, forms a dodecamer of heterodimers. Only shows activity in the heterodimer.

The catalysed reaction is aldehydo-D-ribose 5-phosphate + D-glyceraldehyde 3-phosphate + L-glutamine = pyridoxal 5'-phosphate + L-glutamate + phosphate + 3 H2O + H(+). It carries out the reaction L-glutamine + H2O = L-glutamate + NH4(+). The protein operates within cofactor biosynthesis; pyridoxal 5'-phosphate biosynthesis. Functionally, catalyzes the hydrolysis of glutamine to glutamate and ammonia as part of the biosynthesis of pyridoxal 5'-phosphate. The resulting ammonia molecule is channeled to the active site of PdxS. This chain is Pyridoxal 5'-phosphate synthase subunit PdxT, found in Metallosphaera sedula (strain ATCC 51363 / DSM 5348 / JCM 9185 / NBRC 15509 / TH2).